Reading from the N-terminus, the 224-residue chain is MSTAEQRLRLMQLASSNLPIGGYSWSQGLEWAVEAGWVPDVAAFERWQRRQMTEGFFTVDLPLFARLYRACEQGDIAAAQRWTAYLLACRETRELREEERNRGAAFARLLSDWQPDCPPAWRTLCQQSQLAGMAWLGVRWRIALPEMALSLGYSWIESAVMAGVKLVPFGQQAAQQLILRLCDHYAAEMPRALAAPDGDIGSATPLAAIASARHETQYSRLFRS.

The protein belongs to the UreF family. In terms of assembly, ureD, UreF and UreG form a complex that acts as a GTP-hydrolysis-dependent molecular chaperone, activating the urease apoprotein by helping to assemble the nickel containing metallocenter of UreC. The UreE protein probably delivers the nickel.

It localises to the cytoplasm. Functionally, required for maturation of urease via the functional incorporation of the urease nickel metallocenter. The chain is Urease accessory protein UreF from Klebsiella pneumoniae (strain 342).